The chain runs to 277 residues: Undecaprenyl-diphosphatase (277 aa).

6 helical membrane-spanning segments follow: residues 47–67 (FNII…RGKI), 85–105 (ANLL…ADLI), 108–128 (WLFN…VMLW), 183–203 (AATE…AVYS), 218–238 (VFAV…RALL), and 249–269 (FAWY…FHLI).

It belongs to the UppP family.

Its subcellular location is the cell inner membrane. The catalysed reaction is di-trans,octa-cis-undecaprenyl diphosphate + H2O = di-trans,octa-cis-undecaprenyl phosphate + phosphate + H(+). Catalyzes the dephosphorylation of undecaprenyl diphosphate (UPP). Confers resistance to bacitracin. This is Undecaprenyl-diphosphatase from Pseudomonas aeruginosa (strain UCBPP-PA14).